We begin with the raw amino-acid sequence, 321 residues long: tRNA(Ile)-lysidine synthase (321 aa).

30–35 (SGGSDS) provides a ligand contact to ATP.

It belongs to the tRNA(Ile)-lysidine synthase family.

The protein resides in the cytoplasm. It carries out the reaction cytidine(34) in tRNA(Ile2) + L-lysine + ATP = lysidine(34) in tRNA(Ile2) + AMP + diphosphate + H(+). Functionally, ligates lysine onto the cytidine present at position 34 of the AUA codon-specific tRNA(Ile) that contains the anticodon CAU, in an ATP-dependent manner. Cytidine is converted to lysidine, thus changing the amino acid specificity of the tRNA from methionine to isoleucine. The protein is tRNA(Ile)-lysidine synthase of Chlamydia trachomatis serovar L2 (strain ATCC VR-902B / DSM 19102 / 434/Bu).